We begin with the raw amino-acid sequence, 151 residues long: Large ribosomal subunit protein uL13 (151 aa).

This sequence belongs to the universal ribosomal protein uL13 family. As to quaternary structure, part of the 50S ribosomal subunit.

This protein is one of the early assembly proteins of the 50S ribosomal subunit, although it is not seen to bind rRNA by itself. It is important during the early stages of 50S assembly. The protein is Large ribosomal subunit protein uL13 of Nostoc sp. (strain PCC 7120 / SAG 25.82 / UTEX 2576).